Consider the following 145-residue polypeptide: Ribonuclease H (145 aa).

The RNase H type-1 domain maps to 2–143 (SKKEVAIYTD…ADSLARKAII (142 aa)). Mg(2+)-binding residues include D11, E49, D71, and D135.

This sequence belongs to the RNase H family. Monomer. The cofactor is Mg(2+).

Its subcellular location is the cytoplasm. The enzyme catalyses Endonucleolytic cleavage to 5'-phosphomonoester.. Endonuclease that specifically degrades the RNA of RNA-DNA hybrids. The polypeptide is Ribonuclease H (Wolbachia sp. subsp. Drosophila simulans (strain wRi)).